The following is a 445-amino-acid chain: Na(+)-translocating NADH-quinone reductase subunit A (445 aa).

This sequence belongs to the NqrA family. As to quaternary structure, composed of six subunits; NqrA, NqrB, NqrC, NqrD, NqrE and NqrF.

The enzyme catalyses a ubiquinone + n Na(+)(in) + NADH + H(+) = a ubiquinol + n Na(+)(out) + NAD(+). Functionally, NQR complex catalyzes the reduction of ubiquinone-1 to ubiquinol by two successive reactions, coupled with the transport of Na(+) ions from the cytoplasm to the periplasm. NqrA to NqrE are probably involved in the second step, the conversion of ubisemiquinone to ubiquinol. This chain is Na(+)-translocating NADH-quinone reductase subunit A, found in Marinomonas sp. (strain MWYL1).